The following is a 637-amino-acid chain: Probable potassium transport system protein Kup 2 (637 aa).

The segment at 1 to 21 (MDLASRDSEAETVEQSSHSGA) is disordered. Helical transmembrane passes span 29 to 49 (LMLG…IYAF), 68 to 88 (VLSL…VAFV), 116 to 136 (LILA…IITP), 150 to 170 (VTPT…AILF), 180 to 200 (VAAV…VAGL), 228 to 248 (AAFV…ALYV), 258 to 278 (IVLA…FGQG), 300 to 320 (ALMP…QAVI), 359 to 379 (LLVA…SSLA), 381 to 401 (AYGI…FVVM), 409 to 429 (LAVA…FFLA), and 434 to 454 (IFEG…IMWT).

This sequence belongs to the HAK/KUP transporter (TC 2.A.72) family.

Its subcellular location is the cell inner membrane. It carries out the reaction K(+)(in) + H(+)(in) = K(+)(out) + H(+)(out). Its function is as follows. Transport of potassium into the cell. Likely operates as a K(+):H(+) symporter. The chain is Probable potassium transport system protein Kup 2 from Mesorhizobium japonicum (strain LMG 29417 / CECT 9101 / MAFF 303099) (Mesorhizobium loti (strain MAFF 303099)).